A 280-amino-acid polypeptide reads, in one-letter code: MASSFKSPADTAKACVGVAALKEKAPLSNLIVLSFVAGAYIAFGGLLAEVATGGMAAAGWPTGLVKLVFGGVFPVGLMLVVIAGSELFTGNCMYMPMGILQGEASVMGTIKNWVGSWVFNLVGALFVAYVLAYLTGILTAEPWAATAVTIAKTKALGGAQFIAAGKTVTSLSWMQVFWRAIGCNWLVCLAVYLAVASDDVIGKSFGIWFPIMAFVCIGFEHVVANMFFIPVGIFIGGVTWSQFFINNMIPATLGNIVGGAIFVGCIYWFTYLRGTNKAKA.

Transmembrane regions (helical) follow at residues 33 to 49 (LSFVAGAYIAFGGLLAE), 67 to 83 (LVFGGVFPVGLMLVVIA), 116 to 133 (SWVFNLVGALFVAYVLAY), 177 to 195 (FWRAIGCNWLVCLAVYLAV), 204 to 219 (SFGIWFPIMAFVCIGF), and 253 to 272 (LGNIVGGAIFVGCIYWFTYL).

Belongs to the FNT transporter (TC 1.A.16) family.

It localises to the cell membrane. In terms of biological role, may act as a formate transporter. This Methanobacterium formicicum protein is Probable formate transporter (fdhC).